The sequence spans 1149 residues: Golgi apparatus protein 1 homolog (1149 aa).

The N-terminal stretch at 1–19 is a signal peptide; that stretch reads MWRFPLILASVCWLTTAQQ. The Extracellular portion of the chain corresponds to 20-1115; that stretch reads QNVANDPDKK…NLVMEHPERN (1096 aa). Cys-rich GLG1 repeat units lie at residues 24 to 69, 71 to 135, 139 to 207, 216 to 276, 277 to 344, 349 to 411, 415 to 475, 477 to 549, 551 to 610, 613 to 676, 677 to 736, 743 to 803, 809 to 867, 868 to 938, 945 to 1009, and 1010 to 1070; these read NDPD…FSET, TLSE…KNVT, KCHA…VKNA, ILGD…NDKF, MDPE…NQPE, QPSK…ESRN, KLGA…NVDS, DMVP…YDEQ, PLSV…ETDN, RKHP…DAKE, MNNK…FEHK, DLTD…IECL, HLGP…IVRL, LQRE…RQSI, DFSP…NKGL, and IRDK…DKQE. The N-linked (GlcNAc...) asparagine glycan is linked to asparagine 133. Asparagine 411 carries N-linked (GlcNAc...) asparagine glycosylation. A helical transmembrane segment spans residues 1116 to 1136; that stretch reads SILGYLAGFIVFILLIGCCCG. The Cytoplasmic portion of the chain corresponds to 1137–1149; it reads RVSKKQYIEMKNR.

It is found in the membrane. The polypeptide is Golgi apparatus protein 1 homolog (Caenorhabditis elegans).